The following is a 606-amino-acid chain: Probable glutamine--fructose-6-phosphate aminotransferase [isomerizing] (606 aa).

Cys2 functions as the For GATase activity in the catalytic mechanism. Positions 2 to 224 (CGISACLNHT…DNDYGYITNN (223 aa)) constitute a Glutamine amidotransferase type-2 domain. 2 SIS domains span residues 282 to 427 (FFPE…SLDN) and 458 to 596 (LLEF…PDYP).

The catalysed reaction is D-fructose 6-phosphate + L-glutamine = D-glucosamine 6-phosphate + L-glutamate. Its pathway is nucleotide-sugar biosynthesis; UDP-N-acetyl-alpha-D-glucosamine biosynthesis; alpha-D-glucosamine 6-phosphate from D-fructose 6-phosphate: step 1/1. Controls the flux of glucose into the hexosamine pathway. Most likely involved in regulating the availability of precursors for glycosylation of proteins (Potential). The protein is Probable glutamine--fructose-6-phosphate aminotransferase [isomerizing] of Acanthamoeba polyphaga (Amoeba).